The chain runs to 81 residues: ATP synthase subunit c (81 aa).

Transmembrane regions (helical) follow at residues Leu7–Phe27 and Ile55–Phe75.

Belongs to the ATPase C chain family. As to quaternary structure, F-type ATPases have 2 components, F(1) - the catalytic core - and F(0) - the membrane proton channel. F(1) has five subunits: alpha(3), beta(3), gamma(1), delta(1), epsilon(1). F(0) has three main subunits: a(1), b(2) and c(10-14). The alpha and beta chains form an alternating ring which encloses part of the gamma chain. F(1) is attached to F(0) by a central stalk formed by the gamma and epsilon chains, while a peripheral stalk is formed by the delta and b chains.

The protein localises to the cell inner membrane. Its function is as follows. F(1)F(0) ATP synthase produces ATP from ADP in the presence of a proton or sodium gradient. F-type ATPases consist of two structural domains, F(1) containing the extramembraneous catalytic core and F(0) containing the membrane proton channel, linked together by a central stalk and a peripheral stalk. During catalysis, ATP synthesis in the catalytic domain of F(1) is coupled via a rotary mechanism of the central stalk subunits to proton translocation. Key component of the F(0) channel; it plays a direct role in translocation across the membrane. A homomeric c-ring of between 10-14 subunits forms the central stalk rotor element with the F(1) delta and epsilon subunits. This chain is ATP synthase subunit c, found in Acinetobacter baumannii (strain ACICU).